The sequence spans 227 residues: MKVSYHGHSVVKIETNGKVILIDPFLTGNPKTDLKAEDVKVDAILLSHGHGDHVGDTVELAKKNNAVVVAPFELATFLSWQGVNTHPMHIGGSHEFDFGKVKFTQAFHGSSYIDEENKTITYTGMPAGILFTAEEKTLYHAGDTALFSDMKLIGELNNIDVAFLPIGDNFTMGPEDAVLAAKWVQAKTVVPMHYNTFPVIEQDPYQFVEKLQNCTGKVLEAGESITL.

Belongs to the UPF0173 family.

This is UPF0173 metal-dependent hydrolase BCAH820_4729 from Bacillus cereus (strain AH820).